We begin with the raw amino-acid sequence, 513 residues long: Interferon-induced, double-stranded RNA-activated protein kinase (513 aa).

N-acetylalanine is present on Ala2. Residues 8-76 (FYVDKLNKYS…AKLAVEILDN (69 aa)) enclose the DRBM 1 domain. Lys68 participates in a covalent cross-link: Glycyl lysine isopeptide (Lys-Gly) (interchain with G-Cter in ISG15). Residue Ser82 is modified to Phosphoserine. A Phosphothreonine modification is found at Thr84. The 68-residue stretch at 95–162 (NYIGLVNSFA…AKNAYQKLSE (68 aa)) folds into the DRBM 2 domain. Tyr96 is modified (phosphotyrosine; by autocatalysis). Lys154 participates in a covalent cross-link: Glycyl lysine isopeptide (Lys-Gly) (interchain with G-Cter in ISG15). The residue at position 157 (Tyr157) is a Phosphotyrosine; by autocatalysis. Phosphothreonine is present on Thr227. Residues 235 to 513 (DFEDIEEIGS…ISEKKKRNTC (279 aa)) are interaction with TRAF5. Positions 236–502 (FEDIEEIGSG…EILKTLAEWK (267 aa)) constitute a Protein kinase domain. 242–250 (IGSGGFGQV) is a binding site for ATP. A Phosphotyrosine; by autocatalysis modification is found at Tyr262. Lys265 contributes to the ATP binding site. Residue Asp373 is the Proton acceptor of the active site. A phosphothreonine; by autocatalysis mark is found at Thr406 and Thr411. Ser416 is subject to Phosphoserine.

This sequence belongs to the protein kinase superfamily. Ser/Thr protein kinase family. GCN2 subfamily. In terms of assembly, homodimer. Interacts with DNAJC3. Interacts with STRBP. Forms a complex with FANCA, FANCC, FANCG and HSP70. Interacts with ADAR/ADAR1. The inactive form interacts with NCK1 and GSN. Interacts (via the kinase catalytic domain) with STAT3 (via SH2 domain), TRAF2 (C-terminus), TRAF5 (C-terminus) and TRAF6 (C-terminus). Interacts with MAP2K6, IKBKB/IKKB, IRS1, NPM1, TARBP2, NLRP1, NLRP3, NLRC4 and AIM2. Interacts (via DRBM 1 domain) with DUS2L (via DRBM domain). Interacts with DHX9 (via N-terminus) and this interaction is dependent upon activation of the kinase. Autophosphorylated on several Ser, Thr and Tyr residues. Autophosphorylation of Thr-411 is dependent on Thr-406 and is stimulated by dsRNA binding and dimerization. Autophosphorylation apparently leads to the activation of the kinase. Tyrosine autophosphorylation is essential for efficient dsRNA-binding, dimerization, and kinase activation.

The protein resides in the cytoplasm. It localises to the nucleus. Its subcellular location is the perinuclear region. The enzyme catalyses L-seryl-[protein] + ATP = O-phospho-L-seryl-[protein] + ADP + H(+). It catalyses the reaction L-threonyl-[protein] + ATP = O-phospho-L-threonyl-[protein] + ADP + H(+). It carries out the reaction L-tyrosyl-[protein] + ATP = O-phospho-L-tyrosyl-[protein] + ADP + H(+). Initially produced in an inactive form and is activated by binding to viral dsRNA, which causes dimerization and autophosphorylation in the activation loop and stimulation of function. ISGylation can activate it in the absence of viral infection. Can also be activated by heparin, pro-inflammatory stimuli, growth factors, cytokines, oxidative stress and the cellular protein PRKRA. Activity is markedly stimulated by manganese ions. Activation is blocked by the cellular proteins TARBP2, DUS2L, NPM1, NCK1 and ADAR. Functionally, IFN-induced dsRNA-dependent serine/threonine-protein kinase that phosphorylates the alpha subunit of eukaryotic translation initiation factor 2 (EIF2S1/eIF-2-alpha) and plays a key role in the innate immune response to viral infection. Inhibits viral replication via the integrated stress response (ISR): EIF2S1/eIF-2-alpha phosphorylation in response to viral infection converts EIF2S1/eIF-2-alpha in a global protein synthesis inhibitor, resulting to a shutdown of cellular and viral protein synthesis, while concomitantly initiating the preferential translation of ISR-specific mRNAs, such as the transcriptional activator ATF4. Exerts its antiviral activity on a wide range of DNA and RNA viruses. Also involved in the regulation of signal transduction, apoptosis, cell proliferation and differentiation: phosphorylates other substrates including p53/TP53, PPP2R5A, DHX9, ILF3 and IRS1. In addition to serine/threonine-protein kinase activity, also has tyrosine-protein kinase activity and phosphorylates CDK1 at 'Tyr-4' upon DNA damage, facilitating its ubiquitination and proteasomal degradation. Either as an adapter protein and/or via its kinase activity, can regulate various signaling pathways (p38 MAP kinase, NF-kappa-B and insulin signaling pathways) and transcription factors (JUN, STAT1, STAT3, IRF1, ATF3) involved in the expression of genes encoding pro-inflammatory cytokines and IFNs. Activates the NF-kappa-B pathway via interaction with IKBKB and TRAF family of proteins and activates the p38 MAP kinase pathway via interaction with MAP2K6. Can act as both a positive and negative regulator of the insulin signaling pathway (ISP). Negatively regulates ISP by inducing the inhibitory phosphorylation of insulin receptor substrate 1 (IRS1) at 'Ser-312' and positively regulates ISP via phosphorylation of PPP2R5A which activates FOXO1, which in turn up-regulates the expression of insulin receptor substrate 2 (IRS2). Can regulate NLRP3 inflammasome assembly and the activation of NLRP3, NLRP1, AIM2 and NLRC4 inflammasomes. Plays a role in the regulation of the cytoskeleton by binding to gelsolin (GSN), sequestering the protein in an inactive conformation away from actin. The chain is Interferon-induced, double-stranded RNA-activated protein kinase (Eif2ak2) from Rattus norvegicus (Rat).